Here is a 284-residue protein sequence, read N- to C-terminus: UDP-N-acetylenolpyruvoylglucosamine reductase (284 aa).

In terms of domain architecture, FAD-binding PCMH-type spans 12-174 (KIGGRVKYLV…TRVMMSFKRE (163 aa)). The active site involves Arg153. Ser203 serves as the catalytic Proton donor. Glu274 is an active-site residue.

Belongs to the MurB family. FAD serves as cofactor.

The protein resides in the cytoplasm. The catalysed reaction is UDP-N-acetyl-alpha-D-muramate + NADP(+) = UDP-N-acetyl-3-O-(1-carboxyvinyl)-alpha-D-glucosamine + NADPH + H(+). The protein operates within cell wall biogenesis; peptidoglycan biosynthesis. Functionally, cell wall formation. This chain is UDP-N-acetylenolpyruvoylglucosamine reductase, found in Thermotoga petrophila (strain ATCC BAA-488 / DSM 13995 / JCM 10881 / RKU-1).